Consider the following 562-residue polypeptide: Nucleoprotein (562 aa).

The interval 54 to 237 is binding site for the cap structure m7GTP; sequence LRKTKRTDGD…ITKDESAINI (184 aa). Residues Asp-381 and Glu-383 each coordinate Mn(2+). Residues Glu-391, Cys-498, His-501, and Cys-523 each contribute to the Zn(2+) site. Asp-527 contacts Mn(2+).

This sequence belongs to the arenaviridae nucleocapsid protein family. Homomultimerizes to form the nucleocapsid. Binds to viral genomic RNA. Interacts with glycoprotein G2. Interacts with protein Z; this interaction probably directs the encapsidated genome to budding sites. Interacts with protein L; this interaction does not interfere with Z-L interaction. Interacts with host IKBKE (via Protein kinase domain); the interaction inhibits IKBKE kinase activity.

The protein localises to the virion. The protein resides in the host cytoplasm. In terms of biological role, encapsidates the genome, protecting it from nucleases. The encapsidated genomic RNA is termed the nucleocapsid (NC). Serves as template for viral transcription and replication. The increased presence of protein N in host cell does not seem to trigger the switch from transcription to replication as observed in other negative strain RNA viruses. Through the interaction with host IKBKE, strongly inhibits the phosphorylation and nuclear translocation of host IRF3, a protein involved in interferon activation pathway, leading to the inhibition of interferon-beta and IRF3-dependent promoters activation. Also encodes a functional 3'-5' exoribonuclease that degrades preferentially dsRNA substrates and thereby participates in the suppression of interferon induction. In Homo sapiens (Human), this protein is Nucleoprotein.